A 291-amino-acid polypeptide reads, in one-letter code: Undecaprenyl-diphosphatase (291 aa).

The next 8 membrane-spanning stretches (helical) occupy residues 1–21 (MIII…LTEF), 48–68 (SAFT…AWVF), 100–120 (LHVL…DDFI), 124–144 (LFSV…MIIA), 160–180 (INYV…WPGF), 201–221 (SDFT…LSLV), 230–250 (AHIP…LIAI), and 270–290 (IVLV…QGIS).

It belongs to the UppP family.

The protein localises to the cell membrane. The enzyme catalyses di-trans,octa-cis-undecaprenyl diphosphate + H2O = di-trans,octa-cis-undecaprenyl phosphate + phosphate + H(+). Functionally, catalyzes the dephosphorylation of undecaprenyl diphosphate (UPP). Confers resistance to bacitracin. In Staphylococcus haemolyticus (strain JCSC1435), this protein is Undecaprenyl-diphosphatase.